A 965-amino-acid chain; its full sequence is Valine--tRNA ligase (965 aa).

The tract at residues 1–22 is disordered; it reads MENTPSHINKTEPSLDKTYSPQ. The 'HIGH' region signature appears at 56–66; it reads PNVTGSLHMGH. Positions 568 to 572 match the 'KMSKS' region motif; it reads KMSKS. Residue Lys571 coordinates ATP. Positions 896 to 965 form a coiled coil; sequence LIDKATELDR…IEQQATIAAL (70 aa).

Belongs to the class-I aminoacyl-tRNA synthetase family. ValS type 1 subfamily. As to quaternary structure, monomer.

The protein resides in the cytoplasm. It catalyses the reaction tRNA(Val) + L-valine + ATP = L-valyl-tRNA(Val) + AMP + diphosphate. Functionally, catalyzes the attachment of valine to tRNA(Val). As ValRS can inadvertently accommodate and process structurally similar amino acids such as threonine, to avoid such errors, it has a 'posttransfer' editing activity that hydrolyzes mischarged Thr-tRNA(Val) in a tRNA-dependent manner. This Yersinia pseudotuberculosis serotype I (strain IP32953) protein is Valine--tRNA ligase.